Reading from the N-terminus, the 149-residue chain is Urease accessory protein UreE (149 aa).

Belongs to the UreE family.

The protein localises to the cytoplasm. Functionally, involved in urease metallocenter assembly. Binds nickel. Probably functions as a nickel donor during metallocenter assembly. In Ureaplasma urealyticum serovar 10 (strain ATCC 33699 / Western), this protein is Urease accessory protein UreE.